Here is a 666-residue protein sequence, read N- to C-terminus: Probable potassium transport system protein Kup (666 aa).

Helical transmembrane passes span 16–36, 58–78, 99–119, 141–161, 167–187, 221–241, 253–273, 292–312, 343–363, 373–393, 402–422, and 424–444; these read GFIIALGIVYGDIGTSPLYTM, ISLIIWTLTLITTIKYVLVAL, TPWLIVPAVIGGATLLSDGAL, IFQNQSNVIFATLFILLLLFA, TGVIGKLFGPIMFIWFAFLGI, IFILGSIFLATTGAEALYSDL, WPFVKVAIILSYCGQGAWILA, FTMHVVILATLAAIIASQALI, TYIPVINWFLFAITTSIVLLF, YGLAITITMLMTTILLSFFLI, VLLMMIFFGILEGIFFLASAV, and FMHGGYVVVIIAVAIIFIMII.

This sequence belongs to the HAK/KUP transporter (TC 2.A.72) family.

Its subcellular location is the cell membrane. It catalyses the reaction K(+)(in) + H(+)(in) = K(+)(out) + H(+)(out). Transport of potassium into the cell. Likely operates as a K(+):H(+) symporter. The protein is Probable potassium transport system protein Kup of Streptococcus agalactiae serotype III (strain NEM316).